The sequence spans 375 residues: Saccharopine dehydrogenase [NAD(+), L-lysine-forming] (375 aa).

The L-saccharopine site is built by Arg-18 and Lys-78. Lys-78 (proton acceptor) is an active-site residue. Catalysis depends on His-96, which acts as the Proton donor. Residue Gln-101 participates in L-saccharopine binding. An NAD(+)-binding site is contributed by Arg-130. L-saccharopine is bound by residues Arg-131 and Phe-135. NAD(+) is bound by residues Gly-203–Arg-204, Asp-227, Thr-231, Tyr-252, and Val-279. Residues Cys-205 and Cys-250 are joined by a disulfide bond. An L-saccharopine-binding site is contributed by Ser-280–Asp-282. Ile-322–Leu-325 is an NAD(+) binding site.

It belongs to the AlaDH/PNT family. In terms of assembly, monomer.

The enzyme catalyses L-saccharopine + NAD(+) + H2O = L-lysine + 2-oxoglutarate + NADH + H(+). It participates in amino-acid biosynthesis; L-lysine biosynthesis via AAA pathway; L-lysine from L-alpha-aminoadipate (fungal route): step 3/3. Functionally, catalyzes the NAD(+)-dependent cleavage of saccharopine to L-lysine and 2-oxoglutarate, the final step in the alpha-aminoadipate (AAA) pathway for lysin biosynthesis. The polypeptide is Saccharopine dehydrogenase [NAD(+), L-lysine-forming] (Emericella nidulans (strain FGSC A4 / ATCC 38163 / CBS 112.46 / NRRL 194 / M139) (Aspergillus nidulans)).